Here is a 306-residue protein sequence, read N- to C-terminus: tRNA dimethylallyltransferase (306 aa).

9–16 (GPTAIGKT) lines the ATP pocket. Residue 11-16 (TAIGKT) coordinates substrate. An interaction with substrate tRNA region spans residues 34-37 (DSMQ).

This sequence belongs to the IPP transferase family. As to quaternary structure, monomer. The cofactor is Mg(2+).

The catalysed reaction is adenosine(37) in tRNA + dimethylallyl diphosphate = N(6)-dimethylallyladenosine(37) in tRNA + diphosphate. Its function is as follows. Catalyzes the transfer of a dimethylallyl group onto the adenine at position 37 in tRNAs that read codons beginning with uridine, leading to the formation of N6-(dimethylallyl)adenosine (i(6)A). The chain is tRNA dimethylallyltransferase from Lactobacillus acidophilus (strain ATCC 700396 / NCK56 / N2 / NCFM).